We begin with the raw amino-acid sequence, 147 residues long: Lysozyme C (147 aa).

The first 18 residues, 1-18 (MRSLLVLVLCFLPLAALG), serve as a signal peptide directing secretion. One can recognise a C-type lysozyme domain in the interval 19-147 (KVYGRCELAA…VNAWIRGCRL (129 aa)). Cystine bridges form between Cys24-Cys145, Cys48-Cys133, Cys82-Cys98, and Cys94-Cys112. Catalysis depends on residues Glu53 and Asp70.

Belongs to the glycosyl hydrolase 22 family. As to quaternary structure, monomer.

Its subcellular location is the secreted. The enzyme catalyses Hydrolysis of (1-&gt;4)-beta-linkages between N-acetylmuramic acid and N-acetyl-D-glucosamine residues in a peptidoglycan and between N-acetyl-D-glucosamine residues in chitodextrins.. Its function is as follows. Lysozymes have primarily a bacteriolytic function; those in tissues and body fluids are associated with the monocyte-macrophage system and enhance the activity of immunoagents. This is Lysozyme C (LYZ) from Coturnix japonica (Japanese quail).